A 419-amino-acid chain; its full sequence is GTPase Obg (419 aa).

One can recognise an Obg domain in the interval 1–156 (MRFVDYVSIE…FYLDLQLKVM (156 aa)). One can recognise an OBG-type G domain in the interval 157–334 (ADIGLVGKPN…LGEKQKKLEI (178 aa)). GTP contacts are provided by residues 163–170 (GKPNAGKS), 188–192 (FTTLA), 209–212 (DLPG), 278–281 (NKCD), and 315–317 (NII). Mg(2+) is bound by residues Ser170 and Thr190. Positions 342 to 419 (IEFNLKAPFL…RIYEFEFHWN (78 aa)) constitute an OCT domain.

Belongs to the TRAFAC class OBG-HflX-like GTPase superfamily. OBG GTPase family. As to quaternary structure, monomer. Mg(2+) is required as a cofactor.

It is found in the cytoplasm. Its function is as follows. An essential GTPase which binds GTP, GDP and possibly (p)ppGpp with moderate affinity, with high nucleotide exchange rates and a fairly low GTP hydrolysis rate. Plays a role in control of the cell cycle, stress response, ribosome biogenesis and in those bacteria that undergo differentiation, in morphogenesis control. This is GTPase Obg from Mesomycoplasma hyopneumoniae (strain J / ATCC 25934 / NCTC 10110) (Mycoplasma hyopneumoniae).